A 334-amino-acid polypeptide reads, in one-letter code: Tryptophan--tRNA ligase (334 aa).

ATP-binding positions include 11–13 (QPS) and 19–20 (GN). The 'HIGH' region motif lies at 12–20 (PSGELTIGN). Position 135 (aspartate 135) interacts with L-tryptophan. ATP-binding positions include 147–149 (GDD), isoleucine 186, and 195–199 (KMSKS). The 'KMSKS' region motif lies at 195–199 (KMSKS).

This sequence belongs to the class-I aminoacyl-tRNA synthetase family. Homodimer.

It localises to the cytoplasm. The enzyme catalyses tRNA(Trp) + L-tryptophan + ATP = L-tryptophyl-tRNA(Trp) + AMP + diphosphate + H(+). Its function is as follows. Catalyzes the attachment of tryptophan to tRNA(Trp). The protein is Tryptophan--tRNA ligase of Haemophilus influenzae (strain ATCC 51907 / DSM 11121 / KW20 / Rd).